The sequence spans 258 residues: Acyl-[acyl-carrier-protein]--UDP-N-acetylglucosamine O-acyltransferase (258 aa).

The protein belongs to the transferase hexapeptide repeat family. LpxA subfamily. In terms of assembly, homotrimer.

The protein localises to the cytoplasm. The catalysed reaction is a (3R)-hydroxyacyl-[ACP] + UDP-N-acetyl-alpha-D-glucosamine = a UDP-3-O-[(3R)-3-hydroxyacyl]-N-acetyl-alpha-D-glucosamine + holo-[ACP]. The protein operates within glycolipid biosynthesis; lipid IV(A) biosynthesis; lipid IV(A) from (3R)-3-hydroxytetradecanoyl-[acyl-carrier-protein] and UDP-N-acetyl-alpha-D-glucosamine: step 1/6. In terms of biological role, involved in the biosynthesis of lipid A, a phosphorylated glycolipid that anchors the lipopolysaccharide to the outer membrane of the cell. This chain is Acyl-[acyl-carrier-protein]--UDP-N-acetylglucosamine O-acyltransferase, found in Neisseria gonorrhoeae (strain ATCC 700825 / FA 1090).